A 239-amino-acid polypeptide reads, in one-letter code: Zwei Ig domain protein zig-7 (239 aa).

A signal peptide spans 1 to 21 (MKLINCISIALLCTLVDFSSA). The N-linked (GlcNAc...) asparagine glycan is linked to asparagine 43. In terms of domain architecture, Ig-like C2-type spans 145–211 (PHVIGAERRG…TEDHIGKYRC (67 aa)). An intrachain disulfide couples cysteine 164 to cysteine 211.

As to expression, expressed in body wall muscles.

Its subcellular location is the secreted. In terms of biological role, probably not involved in maintaining the position of ASI and ASH head neuron cell bodies and ventral nerve cord axons of PVQ, PVP, RMEV, AVK and HSN neurons. This chain is Zwei Ig domain protein zig-7, found in Caenorhabditis elegans.